Consider the following 242-residue polypeptide: Probable ABC transporter ATP-binding protein PEB1C (242 aa).

The ABC transporter domain occupies 2 to 236; the sequence is IELKNVNKYY…PKTERARLFL (235 aa). 34 to 41 contributes to the ATP binding site; the sequence is GPSGSGKS.

It belongs to the ABC transporter superfamily.

It localises to the cell inner membrane. Functionally, most probably involved, with PEB1, in a binding-protein-dependent transport system for an amino acid. Probably responsible for energy coupling to the transport system. This chain is Probable ABC transporter ATP-binding protein PEB1C (peb1C), found in Campylobacter jejuni subsp. jejuni serotype O:2 (strain ATCC 700819 / NCTC 11168).